The following is a 427-amino-acid chain: 3-phosphoshikimate 1-carboxyvinyltransferase (427 aa).

3 residues coordinate 3-phosphoshikimate: Lys-22, Ser-23, and Arg-27. Lys-22 lines the phosphoenolpyruvate pocket. Phosphoenolpyruvate-binding residues include Gly-96 and Arg-124. Residues Ser-169, Ser-170, Gln-171, Ser-197, Asp-313, Asn-336, and Lys-340 each contribute to the 3-phosphoshikimate site. Phosphoenolpyruvate is bound at residue Gln-171. Catalysis depends on Asp-313, which acts as the Proton acceptor. Residues Arg-344, Arg-386, and Lys-411 each contribute to the phosphoenolpyruvate site.

This sequence belongs to the EPSP synthase family. As to quaternary structure, monomer.

Its subcellular location is the cytoplasm. It carries out the reaction 3-phosphoshikimate + phosphoenolpyruvate = 5-O-(1-carboxyvinyl)-3-phosphoshikimate + phosphate. The protein operates within metabolic intermediate biosynthesis; chorismate biosynthesis; chorismate from D-erythrose 4-phosphate and phosphoenolpyruvate: step 6/7. Its function is as follows. Catalyzes the transfer of the enolpyruvyl moiety of phosphoenolpyruvate (PEP) to the 5-hydroxyl of shikimate-3-phosphate (S3P) to produce enolpyruvyl shikimate-3-phosphate and inorganic phosphate. The polypeptide is 3-phosphoshikimate 1-carboxyvinyltransferase (Escherichia coli O127:H6 (strain E2348/69 / EPEC)).